The following is a 179-amino-acid chain: ATP synthase subunit delta (179 aa).

Belongs to the ATPase delta chain family. As to quaternary structure, F-type ATPases have 2 components, F(1) - the catalytic core - and F(0) - the membrane proton channel. F(1) has five subunits: alpha(3), beta(3), gamma(1), delta(1), epsilon(1). F(0) has three main subunits: a(1), b(2) and c(10-14). The alpha and beta chains form an alternating ring which encloses part of the gamma chain. F(1) is attached to F(0) by a central stalk formed by the gamma and epsilon chains, while a peripheral stalk is formed by the delta and b chains.

The protein localises to the cell membrane. Functionally, f(1)F(0) ATP synthase produces ATP from ADP in the presence of a proton or sodium gradient. F-type ATPases consist of two structural domains, F(1) containing the extramembraneous catalytic core and F(0) containing the membrane proton channel, linked together by a central stalk and a peripheral stalk. During catalysis, ATP synthesis in the catalytic domain of F(1) is coupled via a rotary mechanism of the central stalk subunits to proton translocation. Its function is as follows. This protein is part of the stalk that links CF(0) to CF(1). It either transmits conformational changes from CF(0) to CF(1) or is implicated in proton conduction. In Clostridium acetobutylicum (strain ATCC 824 / DSM 792 / JCM 1419 / IAM 19013 / LMG 5710 / NBRC 13948 / NRRL B-527 / VKM B-1787 / 2291 / W), this protein is ATP synthase subunit delta.